The sequence spans 211 residues: Large ribosomal subunit protein uL4 (211 aa).

The span at 41 to 53 (QAHSRQGTASTLT) shows a compositional bias: polar residues. Positions 41–78 (QAHSRQGTASTLTRAEVRGGGRKPYKQKGTGRARQGTI) are disordered. Residues 60–71 (GGRKPYKQKGTG) show a composition bias toward basic residues.

This sequence belongs to the universal ribosomal protein uL4 family. As to quaternary structure, part of the 50S ribosomal subunit.

In terms of biological role, one of the primary rRNA binding proteins, this protein initially binds near the 5'-end of the 23S rRNA. It is important during the early stages of 50S assembly. It makes multiple contacts with different domains of the 23S rRNA in the assembled 50S subunit and ribosome. Functionally, forms part of the polypeptide exit tunnel. In Prochlorococcus marinus (strain MIT 9303), this protein is Large ribosomal subunit protein uL4.